A 246-amino-acid polypeptide reads, in one-letter code: Aquaporin AqpM (246 aa).

Topologically, residues 1-11 (MVSLTKRCIAE) are cytoplasmic. The helical transmembrane segment at 12-32 (FIGTFILVFFGAGSAAVTLMI) threads the bilayer. At 33-55 (ASGGTSPNPFNIGIGLLGGLGDW) the chain is on the extracellular side. A helical transmembrane segment spans residues 56 to 76 (VAIGLAFGFAIAASIYALGNI). Topologically, residues 77-103 (SGCHINPAVTIGLWSVKKFPGREVVPY) are cytoplasmic. Residues 82–84 (NPA) carry the NPA 1 motif. The chain crosses the membrane as a helical span at residues 104–124 (IIAQLLGAAFGSFIFLQCAGI). The Extracellular portion of the chain corresponds to 125–145 (GAATVGGLGATAPFPGISYWQ). Residues 146–166 (AMLAEVVGTFLLMITIMGIAV) traverse the membrane as a helical segment. The Cytoplasmic portion of the chain corresponds to 167 to 172 (DERAPK). The helical transmembrane segment at 173–193 (GFAGIIIGLTVAGIITTLGNI) threads the bilayer. At 194–217 (SGSSLNPARTFGPYLNDMIFAGTN) the chain is on the extracellular side. The NPA 2 signature appears at 199-201 (NPA). A helical transmembrane segment spans residues 218-238 (LWNYYPIYVIGPIVGAVLAAL). The Cytoplasmic segment spans residues 239–246 (TYQYLTSE).

It belongs to the MIP/aquaporin (TC 1.A.8) family. As to quaternary structure, homotetramer.

It localises to the cell membrane. Its function is as follows. Channel that permits osmotically driven movement of water in both directions. It mediates rapid entry or exit of water in response to abrupt changes in osmolarity. Also exhibits a transient but reproducible increase in the initial glycerol flux. In Methanothermobacter marburgensis (strain ATCC BAA-927 / DSM 2133 / JCM 14651 / NBRC 100331 / OCM 82 / Marburg) (Methanobacterium thermoautotrophicum), this protein is Aquaporin AqpM (aqpM).